Reading from the N-terminus, the 458-residue chain is Phosphomethylpyrimidine synthase (458 aa).

Residues N80, M109, Y139, H175, 195–197, 236–239, and E275 contribute to the substrate site; these read SRG and DSLR. H279 is a Zn(2+) binding site. Y302 contributes to the substrate binding site. H343 lines the Zn(2+) pocket. C423, C426, and C431 together coordinate [4Fe-4S] cluster.

Belongs to the ThiC family. [4Fe-4S] cluster serves as cofactor.

It carries out the reaction 5-amino-1-(5-phospho-beta-D-ribosyl)imidazole + S-adenosyl-L-methionine = 4-amino-2-methyl-5-(phosphooxymethyl)pyrimidine + CO + 5'-deoxyadenosine + formate + L-methionine + 3 H(+). Its pathway is cofactor biosynthesis; thiamine diphosphate biosynthesis. Functionally, catalyzes the synthesis of the hydroxymethylpyrimidine phosphate (HMP-P) moiety of thiamine from aminoimidazole ribotide (AIR) in a radical S-adenosyl-L-methionine (SAM)-dependent reaction. This is Phosphomethylpyrimidine synthase from Acaryochloris marina (strain MBIC 11017).